A 331-amino-acid chain; its full sequence is Meiotic recombination protein W68 (331 aa).

One can recognise a Topo IIA-type catalytic domain in the interval 1-120; that stretch reads MDEFSENIER…LGILAASKGL (120 aa). The active-site O-(5'-phospho-DNA)-tyrosine intermediate is Tyr-81. Mg(2+) is bound by residues Glu-167 and Asp-221.

Belongs to the TOP6A family. Mg(2+) serves as cofactor.

It is found in the nucleus. The catalysed reaction is ATP-dependent breakage, passage and rejoining of double-stranded DNA.. Functionally, required for meiotic recombination. Together with mei-P22, mediates DNA cleavage that forms the double-strand breaks (DSB) that initiate meiotic recombination. The chain is Meiotic recombination protein W68 from Drosophila melanogaster (Fruit fly).